A 566-amino-acid polypeptide reads, in one-letter code: Chromatin assembly factor 1 subunit B (566 aa).

6 WD repeats span residues 11–54 (HNKE…DGKA), 64–103 (RHTK…ELEP), 127–166 (GHLE…KVSI), 169–208 (EHKS…VAFN), 228–279 (FHDD…RPMG), and 351–392 (IHYH…IPLK). 2 disordered regions span residues 411–481 (KSQP…NQPR) and 501–566 (IPLK…KPNK). Polar residues-rich tracts occupy residues 425–437 (TEGT…TLQP) and 469–478 (QPASQSTKVN).

It belongs to the WD repeat HIR1 family. Interacts with CHAF1A.

The protein localises to the nucleus. Its function is as follows. Acts as a component of the histone chaperone complex chromatin assembly factor 1 (CAF-1), which assembles histone octamers onto DNA during replication and repair. CAF-1 performs the first step of the nucleosome assembly process, bringing newly synthesized histones H3 and H4 to replicating DNA; histones H2A/H2B can bind to this chromatin precursor subsequent to DNA replication to complete the histone octamer. The polypeptide is Chromatin assembly factor 1 subunit B (CHAF1B) (Gallus gallus (Chicken)).